The chain runs to 239 residues: Isoprenyl transferase (239 aa).

Aspartate 16 is a catalytic residue. Aspartate 16 contacts Mg(2+). Substrate-binding positions include 17–20 (GNGR), tryptophan 21, arginine 29, histidine 33, and 61–63 (STE). The active-site Proton acceptor is the asparagine 64. Residues tryptophan 65, arginine 67, arginine 187, and 193–195 (RLS) contribute to the substrate site. Glutamate 206 lines the Mg(2+) pocket.

It belongs to the UPP synthase family. In terms of assembly, homodimer. It depends on Mg(2+) as a cofactor.

Catalyzes the condensation of isopentenyl diphosphate (IPP) with allylic pyrophosphates generating different type of terpenoids. The sequence is that of Isoprenyl transferase from Lactobacillus johnsonii (strain CNCM I-12250 / La1 / NCC 533).